The following is a 607-amino-acid chain: T-box transcription factor TBX18 (607 aa).

Positions 18–28 (HAFSVEALIGA) match the Engrailed homology 1 repressor motif. Positions 30–141 (KQQQLQKKRR…PLPSPQAPRV (112 aa)) are disordered. Positions 36 to 40 (KKRRK) match the Nuclear localization signal motif. Positions 44–53 (EEAAGAVDDG) are enriched in low complexity. Positions 143-330 (LQGAELWKRF…RNPFAKGFRD (188 aa)) form a DNA-binding region, T-box.

In terms of assembly, homodimer. Can form a heterodimer with TBX15. Interacts with GATA4 and NKX2-5. Interacts with PAX3. Interacts (via engrailed homology 1 repressor motif) with TLE3; this interaction represses TBX18 transcriptional activity. Interacts with SIX1.

Its subcellular location is the nucleus. Its function is as follows. Acts as a transcriptional repressor involved in developmental processes of a variety of tissues and organs, including the heart and coronary vessels, the ureter and the vertebral column. Required for embryonic development of the sino atrial node (SAN) head area. The chain is T-box transcription factor TBX18 (TBX18) from Homo sapiens (Human).